The sequence spans 277 residues: Ribosomal protein L11 methyltransferase (277 aa).

4 residues coordinate S-adenosyl-L-methionine: threonine 130, glycine 151, aspartate 172, and asparagine 213.

It belongs to the methyltransferase superfamily. PrmA family.

It localises to the cytoplasm. It catalyses the reaction L-lysyl-[protein] + 3 S-adenosyl-L-methionine = N(6),N(6),N(6)-trimethyl-L-lysyl-[protein] + 3 S-adenosyl-L-homocysteine + 3 H(+). In terms of biological role, methylates ribosomal protein L11. The protein is Ribosomal protein L11 methyltransferase of Campylobacter concisus (strain 13826).